The primary structure comprises 48 residues: SRGFGFVTFGDEKGFGFVTFGDEKDAIEGMNGQDLDGRNITVNEAQSR.

The protein is Glycine-rich RNA-binding protein 3 of Populus euphratica (Euphrates poplar).